Reading from the N-terminus, the 218-residue chain is Thiopurine S-methyltransferase (218 aa).

Tryptophan 10, leucine 45, glutamate 66, and arginine 123 together coordinate S-adenosyl-L-methionine.

Belongs to the class I-like SAM-binding methyltransferase superfamily. TPMT family.

The protein localises to the cytoplasm. It catalyses the reaction S-adenosyl-L-methionine + a thiopurine = S-adenosyl-L-homocysteine + a thiopurine S-methylether.. The polypeptide is Thiopurine S-methyltransferase (Xanthomonas axonopodis pv. citri (strain 306)).